We begin with the raw amino-acid sequence, 1518 residues long: Putative cellulose synthase 3 (1518 aa).

Positions 1–731 (MYGTWFTTGK…EEKLEKQSFV (731 aa)) are catalytic. 3 helical membrane passes run 24–44 (PVWV…SVRI), 71–91 (ITVF…VWRL), and 105–125 (LAVL…LSYF). The catalytic subdomain A stretch occupies residues 144–237 (QWPSVDVFVP…FAVIFDCDHV (94 aa)). Residues D186 and D330 contribute to the active site. A catalytic subdomain B region spans residues 314 to 374 (EAVMGIGGFA…GQRVRWARGM (61 aa)). 5 consecutive transmembrane segments (helical) span residues 404–424 (FLFA…LFLG), 428–448 (IAAS…HSVI), 465–485 (IYET…LLQP), 514–534 (ILAG…VWQF), and 543–563 (FILN…SIAV). Residues 569–668 (QTRNAPRVSV…ERQVVSMVFG (100 aa)) form the PilZ domain. The segment at 732-1518 (LKPVPRSARH…IARDDLTGEL (787 aa)) is cyclic di-GMP binding domain. The disordered stretch occupies residues 765-785 (APSPDQSGVTAETPFGDSNTG). The segment covering 768–785 (PDQSGVTAETPFGDSNTG) has biased composition (polar residues). A helical transmembrane segment spans residues 1481–1501 (ALYLAGLAGAGLAALGVWAWL).

This sequence in the N-terminal section; belongs to the glycosyltransferase 2 family. It in the C-terminal section; belongs to the AcsB/BcsB family.

It localises to the cell inner membrane. It catalyses the reaction [(1-&gt;4)-beta-D-glucosyl](n) + UDP-alpha-D-glucose = [(1-&gt;4)-beta-D-glucosyl](n+1) + UDP + H(+). Its pathway is glycan metabolism; bacterial cellulose biosynthesis. This is Putative cellulose synthase 3 (bcsABII-B) from Komagataeibacter xylinus (Gluconacetobacter xylinus).